The primary structure comprises 171 residues: 3-hydroxydecanoyl-[acyl-carrier-protein] dehydratase (171 aa).

Residue histidine 70 is part of the active site.

The protein belongs to the thioester dehydratase family. FabA subfamily. Homodimer.

The protein resides in the cytoplasm. It catalyses the reaction a (3R)-hydroxyacyl-[ACP] = a (2E)-enoyl-[ACP] + H2O. The catalysed reaction is (3R)-hydroxydecanoyl-[ACP] = (2E)-decenoyl-[ACP] + H2O. It carries out the reaction (2E)-decenoyl-[ACP] = (3Z)-decenoyl-[ACP]. Its pathway is lipid metabolism; fatty acid biosynthesis. In terms of biological role, necessary for the introduction of cis unsaturation into fatty acids. Catalyzes the dehydration of (3R)-3-hydroxydecanoyl-ACP to E-(2)-decenoyl-ACP and then its isomerization to Z-(3)-decenoyl-ACP. Can catalyze the dehydratase reaction for beta-hydroxyacyl-ACPs with saturated chain lengths up to 16:0, being most active on intermediate chain length. This is 3-hydroxydecanoyl-[acyl-carrier-protein] dehydratase from Azotobacter vinelandii (strain DJ / ATCC BAA-1303).